Reading from the N-terminus, the 697-residue chain is Elongation factor G (697 aa).

Positions 8-290 (ERYRNFGIMA…AVVDYLPSPL (283 aa)) constitute a tr-type G domain. Residues 17 to 24 (AHIDAGKT), 88 to 92 (DTPGH), and 142 to 145 (NKLD) each bind GTP.

The protein belongs to the TRAFAC class translation factor GTPase superfamily. Classic translation factor GTPase family. EF-G/EF-2 subfamily.

Its subcellular location is the cytoplasm. Functionally, catalyzes the GTP-dependent ribosomal translocation step during translation elongation. During this step, the ribosome changes from the pre-translocational (PRE) to the post-translocational (POST) state as the newly formed A-site-bound peptidyl-tRNA and P-site-bound deacylated tRNA move to the P and E sites, respectively. Catalyzes the coordinated movement of the two tRNA molecules, the mRNA and conformational changes in the ribosome. This is Elongation factor G from Sphingopyxis alaskensis (strain DSM 13593 / LMG 18877 / RB2256) (Sphingomonas alaskensis).